The sequence spans 43 residues: Protein PsbN (43 aa).

The helical transmembrane segment at 7 to 27 threads the bilayer; the sequence is IAIFISCLIVSFTGYALYTAF.

Belongs to the PsbN family.

It is found in the plastid. The protein resides in the chloroplast thylakoid membrane. Functionally, may play a role in photosystem I and II biogenesis. The polypeptide is Protein PsbN (Psilotum nudum (Whisk fern)).